We begin with the raw amino-acid sequence, 342 residues long: N-acetyl-gamma-glutamyl-phosphate reductase (342 aa).

Residue cysteine 146 is part of the active site.

The protein belongs to the NAGSA dehydrogenase family. Type 1 subfamily.

It localises to the cytoplasm. It catalyses the reaction N-acetyl-L-glutamate 5-semialdehyde + phosphate + NADP(+) = N-acetyl-L-glutamyl 5-phosphate + NADPH + H(+). The protein operates within amino-acid biosynthesis; L-arginine biosynthesis; N(2)-acetyl-L-ornithine from L-glutamate: step 3/4. Catalyzes the NADPH-dependent reduction of N-acetyl-5-glutamyl phosphate to yield N-acetyl-L-glutamate 5-semialdehyde. The sequence is that of N-acetyl-gamma-glutamyl-phosphate reductase from Streptomyces avermitilis (strain ATCC 31267 / DSM 46492 / JCM 5070 / NBRC 14893 / NCIMB 12804 / NRRL 8165 / MA-4680).